Consider the following 368-residue polypeptide: tRNA/tmRNA (uracil-C(5))-methyltransferase (368 aa).

S-adenosyl-L-methionine-binding residues include glutamine 190, tyrosine 218, asparagine 223, glutamate 239, and aspartate 301. Catalysis depends on cysteine 326, which acts as the Nucleophile. Residue glutamate 360 is the Proton acceptor of the active site.

This sequence belongs to the class I-like SAM-binding methyltransferase superfamily. RNA M5U methyltransferase family. TrmA subfamily.

It carries out the reaction uridine(54) in tRNA + S-adenosyl-L-methionine = 5-methyluridine(54) in tRNA + S-adenosyl-L-homocysteine + H(+). The enzyme catalyses uridine(341) in tmRNA + S-adenosyl-L-methionine = 5-methyluridine(341) in tmRNA + S-adenosyl-L-homocysteine + H(+). In terms of biological role, dual-specificity methyltransferase that catalyzes the formation of 5-methyluridine at position 54 (m5U54) in all tRNAs, and that of position 341 (m5U341) in tmRNA (transfer-mRNA). In Aliivibrio salmonicida (strain LFI1238) (Vibrio salmonicida (strain LFI1238)), this protein is tRNA/tmRNA (uracil-C(5))-methyltransferase.